Consider the following 91-residue polypeptide: MAKGQSLQDPYLNALRRERIPVSIYLVNGIKLQGQIESFDQFVILLKNTVNQMVYKHAISTVVPARSVSHHNNNHHTAPTEAVENVETQAE.

Positions 9 to 68 (DPYLNALRRERIPVSIYLVNGIKLQGQIESFDQFVILLKNTVNQMVYKHAISTVVPARSV) constitute a Sm domain. The disordered stretch occupies residues 69–91 (SHHNNNHHTAPTEAVENVETQAE).

Belongs to the Hfq family. In terms of assembly, homohexamer.

Functionally, RNA chaperone that binds small regulatory RNA (sRNAs) and mRNAs to facilitate mRNA translational regulation in response to envelope stress, environmental stress and changes in metabolite concentrations. Also binds with high specificity to tRNAs. This chain is RNA-binding protein Hfq, found in Haemophilus influenzae (strain ATCC 51907 / DSM 11121 / KW20 / Rd).